Consider the following 185-residue polypeptide: ATP-dependent protease subunit HslV (185 aa).

Thr12 is an active-site residue. Na(+) contacts are provided by Ala168, Cys171, and Thr174.

This sequence belongs to the peptidase T1B family. HslV subfamily. In terms of assembly, a double ring-shaped homohexamer of HslV is capped on each side by a ring-shaped HslU homohexamer. The assembly of the HslU/HslV complex is dependent on binding of ATP.

It localises to the cytoplasm. The catalysed reaction is ATP-dependent cleavage of peptide bonds with broad specificity.. Allosterically activated by HslU binding. Protease subunit of a proteasome-like degradation complex believed to be a general protein degrading machinery. The sequence is that of ATP-dependent protease subunit HslV from Cereibacter sphaeroides (strain ATCC 17023 / DSM 158 / JCM 6121 / CCUG 31486 / LMG 2827 / NBRC 12203 / NCIMB 8253 / ATH 2.4.1.) (Rhodobacter sphaeroides).